Reading from the N-terminus, the 50-residue chain is Fungus-induced protein 3 (50 aa).

The polypeptide is Fungus-induced protein 3 (fip-3) (Caenorhabditis elegans).